An 81-amino-acid chain; its full sequence is Costars family protein ABRACL (81 aa).

This sequence belongs to the costars family.

In Coturnix coturnix (Common quail), this protein is Costars family protein ABRACL.